Consider the following 385-residue polypeptide: 1-deoxy-D-xylulose 5-phosphate reductoisomerase (385 aa).

NADPH-binding residues include Thr-13, Gly-14, Ser-15, Ile-16, Asn-40, and Asn-122. Lys-123 contacts 1-deoxy-D-xylulose 5-phosphate. Glu-124 contributes to the NADPH binding site. Asp-148 provides a ligand contact to Mn(2+). 1-deoxy-D-xylulose 5-phosphate contacts are provided by Ser-149, Glu-150, Ser-177, and His-200. Position 150 (Glu-150) interacts with Mn(2+). Residue Gly-206 coordinates NADPH. 4 residues coordinate 1-deoxy-D-xylulose 5-phosphate: Ser-213, Asn-218, Lys-219, and Glu-222. Mn(2+) is bound at residue Glu-222.

It belongs to the DXR family. Mg(2+) serves as cofactor. Requires Mn(2+) as cofactor.

It catalyses the reaction 2-C-methyl-D-erythritol 4-phosphate + NADP(+) = 1-deoxy-D-xylulose 5-phosphate + NADPH + H(+). Its pathway is isoprenoid biosynthesis; isopentenyl diphosphate biosynthesis via DXP pathway; isopentenyl diphosphate from 1-deoxy-D-xylulose 5-phosphate: step 1/6. Catalyzes the NADPH-dependent rearrangement and reduction of 1-deoxy-D-xylulose-5-phosphate (DXP) to 2-C-methyl-D-erythritol 4-phosphate (MEP). This is 1-deoxy-D-xylulose 5-phosphate reductoisomerase from Francisella tularensis subsp. novicida (strain U112).